The chain runs to 253 residues: MNSYFEQASGFYGHPHQASGMAMGSGGHHDQTTASAAAAAYRGFTLPLGMSPYANHHLQRTTQDSPYDASITAACNKIYGDAGSAYKQDCLNIKADAVNGYKDIWNTGGANGGGGGGGGGAATAGNTSNGSNAPNAANGQNNAGGGGMPVRPSACTPDSRVGGYLDTSGGSPVSHRGGGSAGGGNGTAGGVPQNSASGVGGGVGAGTAWNANCTISGAAAAQTAAASSLHQPGNHTFYPWMAIAGESTADPIK.

Over residues glycine 125–asparagine 141 the composition is skewed to low complexity. A disordered region spans residues glycine 125–glutamine 193. Residues arginine 176–glycine 189 are compositionally biased toward gly residues. An Antp-type hexapeptide motif is present at residues phenylalanine 237 to alanine 242.

Belongs to the Antp homeobox family.

It is found in the nucleus. Functionally, sequence-specific transcription factor which is part of a developmental regulatory system that provides cells with specific positional identities on the anterior-posterior axis. Binds the consensus region 5'-TTAAT[GT][GA]-3'. This homeotic protein controls development of the cells in the posterior thoracic and first abdominal segments. It activates the synthesis of the decapentaplegic (DPP) growth factor. The polypeptide is Homeotic protein ultrabithorax (Ubx) (Drosophila funebris (Fruit fly)).